Reading from the N-terminus, the 261-residue chain is MVELRLPSNSVVKKGRVHKAQQEMLKPRKVQVYRYDPDLNKNPTIDSFEIDLSKTGPMVLDALIKIKNEIDSTLTFRRSCREGICGSCAMNIDGTNTLACIKPIEDISGDIKIYPLPHMKVVKDLVPDMSHFYTQYESIEPWLKNDNPAPSNSERLQSIQDREKLDGLYECILCACCSTSCPSYWWNSDKYLGPAILLQAYRWIADSRDDNTGARLEALEDPFKLYRCHTIMNCTKTCPKGLNPAKAIGRVKSLIAERHGV.

The 2Fe-2S ferredoxin-type domain maps to 28–119 (RKVQVYRYDP…DIKIYPLPHM (92 aa)). Residues C80, C85, and C100 each coordinate [2Fe-2S] cluster. The 4Fe-4S ferredoxin-type domain maps to 161 to 191 (DREKLDGLYECILCACCSTSCPSYWWNSDKY). Positions 171, 174, and 177 each coordinate [4Fe-4S] cluster. C181 contacts [3Fe-4S] cluster. W186 is a binding site for a ubiquinone. Residues C228 and C234 each coordinate [3Fe-4S] cluster. C238 provides a ligand contact to [4Fe-4S] cluster.

It belongs to the succinate dehydrogenase/fumarate reductase iron-sulfur protein family. As to quaternary structure, part of an enzyme complex containing four subunits: a flavoprotein, an iron-sulfur, cytochrome b-556, and a hydrophobic anchor protein. [2Fe-2S] cluster serves as cofactor. The cofactor is [3Fe-4S] cluster. Requires [4Fe-4S] cluster as cofactor.

It carries out the reaction a quinone + succinate = fumarate + a quinol. It functions in the pathway carbohydrate metabolism; tricarboxylic acid cycle; fumarate from succinate (bacterial route): step 1/1. This chain is Succinate dehydrogenase iron-sulfur subunit (sdhB), found in Rickettsia typhi (strain ATCC VR-144 / Wilmington).